The following is a 122-amino-acid chain: Large ribosomal subunit protein uL14 (122 aa).

This sequence belongs to the universal ribosomal protein uL14 family. In terms of assembly, part of the 50S ribosomal subunit. Forms a cluster with proteins L3 and L19. In the 70S ribosome, L14 and L19 interact and together make contacts with the 16S rRNA in bridges B5 and B8.

Its function is as follows. Binds to 23S rRNA. Forms part of two intersubunit bridges in the 70S ribosome. The protein is Large ribosomal subunit protein uL14 of Thermosynechococcus vestitus (strain NIES-2133 / IAM M-273 / BP-1).